A 72-amino-acid polypeptide reads, in one-letter code: uncharacterized protein (72 aa).

Residues 27–55 (YTQNLINELQEARDSINDLQRAHERLKLV) are a coiled coil.

This is an uncharacterized protein from Schizosaccharomyces pombe (strain 972 / ATCC 24843) (Fission yeast).